We begin with the raw amino-acid sequence, 418 residues long: (+)-T-muurolol synthase ((2E,6E)-farnesyl diphosphate cyclizing) (418 aa).

2 residues coordinate Mg(2+): aspartate 83 and aspartate 88. A DDXXXD motif motif is present at residues 83–88 (DDEYCD). Arginine 179 serves as a coordination point for substrate. 2 residues coordinate Mg(2+): asparagine 225 and serine 229. Residue lysine 232 coordinates substrate. Glutamate 233 contacts Mg(2+). 312–313 (RY) contacts substrate. The tract at residues 354–418 (LPEPGSDGAD…QQSTWRREHR (65 aa)) is disordered. The segment covering 402 to 412 (ASRSSGLQQST) has biased composition (polar residues).

It belongs to the terpene synthase family. The cofactor is Mg(2+).

The catalysed reaction is (2E,6E)-farnesyl diphosphate + H2O = (+)-T-muurolol + diphosphate. It functions in the pathway secondary metabolite biosynthesis; terpenoid biosynthesis. Catalyzes the conversion of (2E,6E)-farnesyl diphosphate (FPP) into (+)-T-muurolol via a 1,10-cyclization, which requires isomerization of FPP to nerolidyl diphosphate (NPP) and then abstraction of the pyrophosphate from intermediate NPP leading to a (E,Z)-germacradienyl (helminthogermacradienyl) cation. The polypeptide is (+)-T-muurolol synthase ((2E,6E)-farnesyl diphosphate cyclizing) (Streptomyces clavuligerus).